Consider the following 101-residue polypeptide: UPF0134 protein MPN_675 (101 aa).

Belongs to the UPF0134 family.

The polypeptide is UPF0134 protein MPN_675 (Mycoplasma pneumoniae (strain ATCC 29342 / M129 / Subtype 1) (Mycoplasmoides pneumoniae)).